Consider the following 266-residue polypeptide: Tryptophan synthase alpha chain (266 aa).

Residues glutamate 50 and aspartate 61 each act as proton acceptor in the active site.

This sequence belongs to the TrpA family. Tetramer of two alpha and two beta chains.

The enzyme catalyses (1S,2R)-1-C-(indol-3-yl)glycerol 3-phosphate + L-serine = D-glyceraldehyde 3-phosphate + L-tryptophan + H2O. It functions in the pathway amino-acid biosynthesis; L-tryptophan biosynthesis; L-tryptophan from chorismate: step 5/5. Its function is as follows. The alpha subunit is responsible for the aldol cleavage of indoleglycerol phosphate to indole and glyceraldehyde 3-phosphate. The chain is Tryptophan synthase alpha chain from Alkaliphilus metalliredigens (strain QYMF).